The primary structure comprises 187 residues: Homeobox expressed in ES cells 1-B (187 aa).

Positions 110–169 (GRRPRTAFTRSQIEILENVFRVNSYPGIDVREELASKLALDEDRIQIWFQNRRAKLKRSH) form a DNA-binding region, homeobox.

The protein belongs to the ANF homeobox family. As to quaternary structure, the N-terminus interacts with the LIM 2 domain of zyx. First expressed at a low level in the late blastula stage (stage 9) in most cells of the animal half of the embryo. Following this, predominantly expressed in two zones; the dorsal blastopore lip (Spemann organizer) at the beginning of gastrulation, and subsequently in the anterior part of the neural anlage (the region of future forebrain).

It localises to the nucleus. In terms of biological role, regulates the earliest stages of development of the anterior neural plate. Plays a role in forebrain development by inhibiting the expression of otx2 and pax6 in the rostral region of the anterior neural plate. Necessary for both neural differentiation and neural patterning. Controls Spemann organizer development. May act as a transcriptional repressor. The sequence is that of Homeobox expressed in ES cells 1-B (hesx1-b) from Xenopus laevis (African clawed frog).